The following is a 271-amino-acid chain: Formamidopyrimidine-DNA glycosylase (271 aa).

The active-site Schiff-base intermediate with DNA is the Pro-2. The Proton donor role is filled by Glu-3. Lys-58 functions as the Proton donor; for beta-elimination activity in the catalytic mechanism. The DNA site is built by His-92, Arg-111, and Arg-152. The FPG-type zinc-finger motif lies at 237–271 (FVYGREGEACKQCGRVLKHATIGQRATVWCGSCQR). Arg-261 (proton donor; for delta-elimination activity) is an active-site residue.

Belongs to the FPG family. In terms of assembly, monomer. It depends on Zn(2+) as a cofactor.

It carries out the reaction Hydrolysis of DNA containing ring-opened 7-methylguanine residues, releasing 2,6-diamino-4-hydroxy-5-(N-methyl)formamidopyrimidine.. The enzyme catalyses 2'-deoxyribonucleotide-(2'-deoxyribose 5'-phosphate)-2'-deoxyribonucleotide-DNA = a 3'-end 2'-deoxyribonucleotide-(2,3-dehydro-2,3-deoxyribose 5'-phosphate)-DNA + a 5'-end 5'-phospho-2'-deoxyribonucleoside-DNA + H(+). In terms of biological role, involved in base excision repair of DNA damaged by oxidation or by mutagenic agents. Acts as a DNA glycosylase that recognizes and removes damaged bases. Has a preference for oxidized purines, such as 7,8-dihydro-8-oxoguanine (8-oxoG). Has AP (apurinic/apyrimidinic) lyase activity and introduces nicks in the DNA strand. Cleaves the DNA backbone by beta-delta elimination to generate a single-strand break at the site of the removed base with both 3'- and 5'-phosphates. The polypeptide is Formamidopyrimidine-DNA glycosylase (Xanthomonas axonopodis pv. citri (strain 306)).